A 709-amino-acid polypeptide reads, in one-letter code: Polyribonucleotide nucleotidyltransferase (709 aa).

Mg(2+)-binding residues include D485 and D491. Positions 552–611 (PRIHTMKIDPKKIKDVIGKGGATIRALTEETGTSIDIDDDGTVKIAATDNNAAKRVMERI) constitute a KH domain. Residues 621 to 689 (NAIYKGKVTR…RQGRIRLTMK (69 aa)) enclose the S1 motif domain.

Belongs to the polyribonucleotide nucleotidyltransferase family. In terms of assembly, component of the RNA degradosome, which is a multiprotein complex involved in RNA processing and mRNA degradation. Requires Mg(2+) as cofactor.

Its subcellular location is the cytoplasm. The enzyme catalyses RNA(n+1) + phosphate = RNA(n) + a ribonucleoside 5'-diphosphate. In terms of biological role, involved in mRNA degradation. Catalyzes the phosphorolysis of single-stranded polyribonucleotides processively in the 3'- to 5'-direction. This chain is Polyribonucleotide nucleotidyltransferase, found in Glaesserella parasuis serovar 5 (strain SH0165) (Haemophilus parasuis).